We begin with the raw amino-acid sequence, 177 residues long: R-phycoerythrin beta chain (177 aa).

Asn35 and Asp39 together coordinate (2R,3E)-phycoerythrobilin. Cys50, Asp54, and Cys61 together coordinate phycourobilin. Residues Asn72, 77-78 (RR), Cys82, and 84-85 (RD) contribute to the (2R,3E)-phycoerythrobilin site. The residue at position 72 (Asn72) is an N4-methylasparagine. 147 to 148 (SG) contacts phycourobilin. Cys158 provides a ligand contact to (2R,3E)-phycoerythrobilin.

This sequence belongs to the phycobiliprotein family. As to quaternary structure, heterododecamer of 6 alpha and 6 beta chains. The basic functional unit of phycobiliproteins is a ring-shaped hexamer formed from two back-to-back trimers contacting via the alpha chain subunits. The trimers are composed of alpha/beta subunit heterodimers arranged around a three-fold axis of symmetry. The phycoerythrins also contain a gamma subunit which is located in the center of the hexamer. In terms of processing, contains two covalently linked phycoerythrobilin chromophores and one covalently linked phycourobilin chromophore.

The protein localises to the plastid. Its subcellular location is the chloroplast thylakoid membrane. Functionally, light-harvesting photosynthetic tetrapyrrole chromophore-protein from the phycobiliprotein complex. The chain is R-phycoerythrin beta chain (cpeB) from Griffithsia monilis (Red alga).